Consider the following 246-residue polypeptide: PARP-type zinc finger-containing protein C2A9.07c (246 aa).

The PARP-type; degenerate zinc-finger motif lies at 8–99; that stretch reads YRVELAKTGR…EKILRAFEQG (92 aa). Positions 103–126 are enriched in basic and acidic residues; that stretch reads EEDEERCRKMASDASEEKDRKIEE. The segment at 103 to 246 is disordered; it reads EEDEERCRKM…ESGNEYSDSD (144 aa). Thr-130 bears the Phosphothreonine mark. Ser-131 carries the phosphoserine modification. The segment covering 157-168 has biased composition (basic residues); it reads NKKHKAERKRSP. Over residues 175–184 the composition is skewed to acidic residues; it reads LEDDEEIEDV. The segment covering 185-196 has biased composition (basic and acidic residues); sequence ASDKDEEEKPWS. Positions 197 to 215 are enriched in acidic residues; that stretch reads GDEEDDDELVVKDSEDETE. A phosphoserine mark is found at Ser-243 and Ser-245.

The protein localises to the nucleus. It localises to the mitochondrion. In Schizosaccharomyces pombe (strain 972 / ATCC 24843) (Fission yeast), this protein is PARP-type zinc finger-containing protein C2A9.07c.